The sequence spans 181 residues: Oligoribonuclease (181 aa).

The 164-residue stretch at 8–171 folds into the Exonuclease domain; that stretch reads LIWIDLEMTG…DDIRESVAEL (164 aa). Residue Tyr129 is part of the active site.

This sequence belongs to the oligoribonuclease family.

It is found in the cytoplasm. Functionally, 3'-to-5' exoribonuclease specific for small oligoribonucleotides. In Enterobacter sp. (strain 638), this protein is Oligoribonuclease.